The chain runs to 123 residues: Small ribosomal subunit protein uS12 (123 aa).

A disordered region spans residues 1-28; that stretch reads MPTIQQLIRKPRQPKVKRSKSQHLESCP. The span at 9-21 shows a compositional bias: basic residues; sequence RKPRQPKVKRSKS. A 3-methylthioaspartic acid modification is found at D89.

This sequence belongs to the universal ribosomal protein uS12 family. As to quaternary structure, part of the 30S ribosomal subunit. Contacts proteins S8 and S17. May interact with IF1 in the 30S initiation complex.

Its function is as follows. With S4 and S5 plays an important role in translational accuracy. Interacts with and stabilizes bases of the 16S rRNA that are involved in tRNA selection in the A site and with the mRNA backbone. Located at the interface of the 30S and 50S subunits, it traverses the body of the 30S subunit contacting proteins on the other side and probably holding the rRNA structure together. The combined cluster of proteins S8, S12 and S17 appears to hold together the shoulder and platform of the 30S subunit. In Dinoroseobacter shibae (strain DSM 16493 / NCIMB 14021 / DFL 12), this protein is Small ribosomal subunit protein uS12.